The chain runs to 314 residues: tRNA uridine(34) hydroxylase (314 aa).

The Rhodanese domain occupies 135 to 229 (ADPETLVIDT…YLEQIPAEES (95 aa)). C189 functions as the Cysteine persulfide intermediate in the catalytic mechanism.

This sequence belongs to the TrhO family.

The catalysed reaction is uridine(34) in tRNA + AH2 + O2 = 5-hydroxyuridine(34) in tRNA + A + H2O. Its function is as follows. Catalyzes oxygen-dependent 5-hydroxyuridine (ho5U) modification at position 34 in tRNAs. The protein is tRNA uridine(34) hydroxylase of Sinorhizobium fredii (strain NBRC 101917 / NGR234).